The primary structure comprises 145 residues: Maximins 3/H3 type 1 (145 aa).

An N-terminal signal peptide occupies residues 1-18 (MNFKYIVAVSFLIASAYA). Propeptides lie at residues 19–43 (RSVQNDEQSLSQRDVLEEEESLREI) and 74–124 (RIAE…KEKR). An Isoleucine amide modification is found at isoleucine 144.

This sequence belongs to the bombinin family. As to expression, expressed by the skin glands.

Its subcellular location is the secreted. In terms of biological role, maximin-3 shows antibacterial activity against both Gram-positive and Gram-negative bacteria. It also shows antimicrobial activity against the fungus C.albicans, but not against A.flavus nor P.uticale. It has little hemolytic activity. It possess a significant cytotoxicity against tumor cell lines. It possess a significant anti-HIV activity. It shows high spermicidal activity. Functionally, maximin-H3 shows antibacterial activity against both Gram-positive and Gram-negative bacteria. It also shows antimicrobial activity against the fungus C.albicans. Shows strong hemolytic activity. The sequence is that of Maximins 3/H3 type 1 from Bombina maxima (Giant fire-bellied toad).